The chain runs to 244 residues: Tetraspanin-7 (244 aa).

At 1 to 11 (METKPVITCLK) the chain is on the cytoplasmic side. The chain crosses the membrane as a helical span at residues 12-35 (TLLIIYSFVFWITGVILLAVGVWG). Topologically, residues 36 to 51 (KLTLGTYISLIAENST) are extracellular. Residue asparagine 49 is glycosylated (N-linked (GlcNAc...) asparagine). A helical membrane pass occupies residues 52–70 (NAPYVLIGTGTTIVVFGLF). Residues 71-81 (GCFATCRGSPW) are Cytoplasmic-facing. The chain crosses the membrane as a helical span at residues 82 to 107 (MLKLYAMFLSLVFLAELVAGISGFVF). Over 108–208 (RHEIKDTFLR…LVTSFMETNM (101 aa)) the chain is Extracellular. Asparagine 150, asparagine 153, asparagine 172, and asparagine 183 each carry an N-linked (GlcNAc...) asparagine glycan. The chain crosses the membrane as a helical span at residues 209-229 (GIIAGVAFGIAFSQLIGMLLA). At 230–244 (CCLSRFITANQYEMV) the chain is on the cytoplasmic side.

It belongs to the tetraspanin (TM4SF) family.

The protein localises to the membrane. May be involved in cell proliferation and cell motility. In Pan troglodytes (Chimpanzee), this protein is Tetraspanin-7 (TSPAN7).